A 210-amino-acid chain; its full sequence is Beta-crystallin A4 (210 aa).

The tract at residues 1 to 25 (MSGMFSGSISETSGMSLQCTKSAGH) is N-terminal arm. Beta/gamma crystallin 'Greek key' domains follow at residues 26-65 (WKIV…KVLS) and 66-112 (GAWV…RPVA). The connecting peptide stretch occupies residues 113–118 (CANHRD). Beta/gamma crystallin 'Greek key' domains follow at residues 119–160 (SRLT…HVHS) and 161–209 (GAWV…RRIQ).

This sequence belongs to the beta/gamma-crystallin family. As to quaternary structure, homo/heterodimer, or complexes of higher-order. The structure of beta-crystallin oligomers seems to be stabilized through interactions between the N-terminal arms.

Its function is as follows. Crystallins are the dominant structural components of the vertebrate eye lens. In Bos taurus (Bovine), this protein is Beta-crystallin A4 (CRYBA4).